The following is a 103-amino-acid chain: Large ribosomal subunit protein uL23 (103 aa).

It belongs to the universal ribosomal protein uL23 family. As to quaternary structure, part of the 50S ribosomal subunit. Contacts protein L29, and trigger factor when it is bound to the ribosome.

One of the early assembly proteins it binds 23S rRNA. One of the proteins that surrounds the polypeptide exit tunnel on the outside of the ribosome. Forms the main docking site for trigger factor binding to the ribosome. The polypeptide is Large ribosomal subunit protein uL23 (Chlorobium phaeobacteroides (strain DSM 266 / SMG 266 / 2430)).